The following is a 339-amino-acid chain: Ketol-acid reductoisomerase (NADP(+)) (339 aa).

The KARI N-terminal Rossmann domain maps to 1-182 (MRVYYDRDAD…GGGRAGIIET (182 aa)). NADP(+)-binding positions include 24–27 (YGSQ), Arg-48, Ser-51, Ser-53, and 83–86 (DELQ). The active site involves His-108. Gly-134 lines the NADP(+) pocket. The region spanning 183 to 328 (TFKEECETDL…ERLRGMMPWI (146 aa)) is the KARI C-terminal knotted domain. Positions 191, 195, 227, and 231 each coordinate Mg(2+). Residue Ser-252 participates in substrate binding.

The protein belongs to the ketol-acid reductoisomerase family. Mg(2+) is required as a cofactor.

It carries out the reaction (2R)-2,3-dihydroxy-3-methylbutanoate + NADP(+) = (2S)-2-acetolactate + NADPH + H(+). It catalyses the reaction (2R,3R)-2,3-dihydroxy-3-methylpentanoate + NADP(+) = (S)-2-ethyl-2-hydroxy-3-oxobutanoate + NADPH + H(+). It functions in the pathway amino-acid biosynthesis; L-isoleucine biosynthesis; L-isoleucine from 2-oxobutanoate: step 2/4. Its pathway is amino-acid biosynthesis; L-valine biosynthesis; L-valine from pyruvate: step 2/4. Involved in the biosynthesis of branched-chain amino acids (BCAA). Catalyzes an alkyl-migration followed by a ketol-acid reduction of (S)-2-acetolactate (S2AL) to yield (R)-2,3-dihydroxy-isovalerate. In the isomerase reaction, S2AL is rearranged via a Mg-dependent methyl migration to produce 3-hydroxy-3-methyl-2-ketobutyrate (HMKB). In the reductase reaction, this 2-ketoacid undergoes a metal-dependent reduction by NADPH to yield (R)-2,3-dihydroxy-isovalerate. This chain is Ketol-acid reductoisomerase (NADP(+)), found in Methylobacterium sp. (strain 4-46).